Consider the following 33-residue polypeptide: Mu-theraphotoxin-Ssp1a (33 aa).

3 disulfides stabilise this stretch: Cys2-Cys17, Cys9-Cys22, and Cys16-Cys29. Leu33 is modified (leucine amide).

Belongs to the neurotoxin 10 (Hwtx-1) family. 22 (Htx-4) subfamily. As to expression, expressed by the venom gland.

The protein resides in the secreted. In terms of biological role, gating modifier toxin that traps voltage-sensing domain II of voltage-gated sodium channels in the resting state without significantly altering the voltage-dependence of activation and inactivation, or delay in recovery from inactivation. Inhibits hNav1.7/SCN9A (IC(50)=134 nM), followed in rank order of potency by Nav1.6/SCN8A (IC(50)=191 nM), Nav1.2/SCN2A (IC(50)=239 nM), Nav1.3/SCN3A (IC(50)=547 nM) and Nav1.1/SCN1A (IC(50)=674 nM). Its binding to Nav1.2, Nav1.3 and Nav1.7 is slowly reversible and incomplete, with ~25% of Nav1.2, ~50% of Nav1.3 and ~40% of Nav1.7 channels recovering from block after a 30 minutes washout, respectively. Binds in the aqueous cleft formed between the S1-S2 and S3-S4 loops of each channel subtype, primarily targeting the S3-S4 loop. This Selenotypus sp. (Feather-legged tarantula) protein is Mu-theraphotoxin-Ssp1a.